We begin with the raw amino-acid sequence, 258 residues long: Glutamate racemase (258 aa).

Substrate-binding positions include 11–12 (DS) and 43–44 (YG). The active-site Proton donor/acceptor is the C74. 75–76 (NT) is a binding site for substrate. The active-site Proton donor/acceptor is the C182. A substrate-binding site is contributed by 183–184 (TH).

It belongs to the aspartate/glutamate racemases family.

The catalysed reaction is L-glutamate = D-glutamate. Its pathway is cell wall biogenesis; peptidoglycan biosynthesis. In terms of biological role, provides the (R)-glutamate required for cell wall biosynthesis. In Leptospira borgpetersenii serovar Hardjo-bovis (strain JB197), this protein is Glutamate racemase.